The primary structure comprises 1405 residues: DNA-directed RNA polymerase subunit beta' (1405 aa).

Residues C70, C72, C85, and C88 each contribute to the Zn(2+) site. Mg(2+) contacts are provided by D460, D462, and D464. Positions 814, 888, 895, and 898 each coordinate Zn(2+).

It belongs to the RNA polymerase beta' chain family. In terms of assembly, the RNAP catalytic core consists of 2 alpha, 1 beta, 1 beta' and 1 omega subunit. When a sigma factor is associated with the core the holoenzyme is formed, which can initiate transcription. The cofactor is Mg(2+). Requires Zn(2+) as cofactor.

The enzyme catalyses RNA(n) + a ribonucleoside 5'-triphosphate = RNA(n+1) + diphosphate. Its function is as follows. DNA-dependent RNA polymerase catalyzes the transcription of DNA into RNA using the four ribonucleoside triphosphates as substrates. The polypeptide is DNA-directed RNA polymerase subunit beta' (Shewanella sp. (strain ANA-3)).